We begin with the raw amino-acid sequence, 476 residues long: MHVPGTFYVNDALKGLLFEELQQAVVRGDHGGFLPAVKQLANVAALPGIVKRSIALPDVHSGYGFAIGNVAAFDMDNPEAVVSPGGVGFDINCGVRLLRTNLTEAEVGPVREQLAQALFDHIPVGVGSQGIIPTTAKDMESALELGMDWSLREGYAWAEDKEHCEEYGRMLNADPRYVSSRAKKRGLPQMGTLGAGNHYAEVQVVDEVYDAVAARRMGIDTPGQVVVMIHSGSRGLGHQVATDALVAMERAMARDGIITNDRQLACARINSEEGQAYLKAMSCAANYAWVNRSSMTFLARQAFAKIFKSTPDDLDMHVVYDVSHNIAKVEQHCVDGQHRRLLVHRKGSTRAFPPHHPLIPADYQLIGQPVLVGGTMGTSSYVLTGTEQGFTETFGSTCHGAGRARSRNNSRNKLDYQDVLDNLKAKGIAIRVASPKLVMEEAPESYKDVSEVVDTCHQAGISKKAVKLRPIAVIKG.

Mn(2+)-binding residues include aspartate 90, cysteine 93, histidine 198, histidine 230, and histidine 324. A GMP-binding site is contributed by 197–201; that stretch reads NHYAE. GMP-binding positions include 324–325, 373–376, serine 380, 399–402, and lysine 475; these read HN, GGTM, and HGAG. Catalysis depends on histidine 399, which acts as the GMP-histidine intermediate.

Belongs to the RtcB family. In terms of assembly, catalytic component of the tRNA-splicing ligase complex. Requires Mn(2+) as cofactor.

It catalyses the reaction a 3'-end 3'-phospho-ribonucleotide-RNA + a 5'-end dephospho-ribonucleoside-RNA + GTP = a ribonucleotidyl-ribonucleotide-RNA + GMP + diphosphate. It carries out the reaction a 3'-end 2',3'-cyclophospho-ribonucleotide-RNA + a 5'-end dephospho-ribonucleoside-RNA + GTP + H2O = a ribonucleotidyl-ribonucleotide-RNA + GMP + diphosphate + H(+). Functionally, catalytic subunit of the tRNA-splicing ligase complex that acts by directly joining spliced tRNA halves to mature-sized tRNAs by incorporating the precursor-derived splice junction phosphate into the mature tRNA as a canonical 3',5'-phosphodiester. May act as an RNA ligase with broad substrate specificity, and may function toward other RNAs. This Chlamydomonas reinhardtii (Chlamydomonas smithii) protein is RNA-splicing ligase RtcB homolog.